Consider the following 35-residue polypeptide: Photosystem II reaction center protein M (35 aa).

A helical transmembrane segment spans residues 5 to 25 (ILAFIATALFIIIPTAFLLIL).

It belongs to the PsbM family. In terms of assembly, PSII is composed of 1 copy each of membrane proteins PsbA, PsbB, PsbC, PsbD, PsbE, PsbF, PsbH, PsbI, PsbJ, PsbK, PsbL, PsbM, PsbT, PsbX, PsbY, PsbZ, Psb30/Ycf12, at least 3 peripheral proteins of the oxygen-evolving complex and a large number of cofactors. It forms dimeric complexes.

It is found in the plastid. The protein resides in the chloroplast thylakoid membrane. In terms of biological role, one of the components of the core complex of photosystem II (PSII). PSII is a light-driven water:plastoquinone oxidoreductase that uses light energy to abstract electrons from H(2)O, generating O(2) and a proton gradient subsequently used for ATP formation. It consists of a core antenna complex that captures photons, and an electron transfer chain that converts photonic excitation into a charge separation. This subunit is found at the monomer-monomer interface. The polypeptide is Photosystem II reaction center protein M (Chara vulgaris (Common stonewort)).